The primary structure comprises 1183 residues: MYLSKIELFGFKSFAHRVRIHFDKGLTAIVGPNGCGKTNVVDAIRWVLGEQKSMLLRSPKMENIIFNGTKRLKPLSFTEVSITIENTRNILPTEYTEVTVTRRLYRNGDSDYLLNMVPCRLKDILDLFADTGMGSDAYSVIELKMIEEIISNKSEERLKLFEEAAGITRYKQRRKQTFRQLESASRDLARVDDVLAEVEKKVRNLRLQVRKAERLKEIREELRTLDLTLSAISMDEHLQKLRPLLDSIAAEERQCHELAATIAKLDSAHQESELRQLELERKLADAQKELNASNQLVHTLEKQLLQHKEKQKNLLQTIERLNYSIADKGRKRLEQEALSKELSEKQTPLQEVCTAQLAEFERLKKQEVELNSALDASRQALQSERRAVAELQKSLNALNLTRQSLRTRKEHLEGSVNRLDQRKRDLERSMEQAEPERRRTSEAIEEKKIALDELKKEEERLVALKASITEQSEKKKEELLSLKSEHNHLNNRIALCNSILEKFEGLPEGVAFLEKQRAGKPGLGCLSDLISVRENDKKAINAALGESLGYYLCRNLEEARLAVSSLAKADKGKVHFLILDLIDGGAKIDYAEIEGARRAIDLVETPAELSKALNLLLQHCYVVADLDAAEQLGKKHPEALFITEKGEKFTRRGMLYGGSAKGGESVRLGKKAERDRLQKQMAGMAETIAEAENALAVLRKEFSAIDTERVKRAAASISQEISALEKRLARLEAEERSGADQIAHADRERTALIASMQSVLDELEKTQPETLRIEAEIETAQQKVNVMQEELSAGESRSRALHAELQAQQGRYRDAQLDLEKHRFRASACQQTIVTLSDEIEGMQHQIARAEKEVAELGQSIAQATAEHEQAVVVSARQQEALNELESSYRDLQTKNHDTLSNLRDLRRKHDLSQQMLAEFNNRKAKLEQEIAHLQATVMERYGVELEMMPAHVPEGFDVAASRERLAYLQKQKEQFGGVNELALEEYESEKERLDFLTAQKEDLVSAEKQLRETIEEINRTALEKFRETFNQVRKNFIRIFHDLFDPEDEVDLLITTSDEDPLEAHIQIVAKPRGKKPLAIEQLSGGEKALTALSLLFAIYLVKPSPFCILDEVDAPLDDANVGRFIKLLKKFENNTQFIIVTHNKKSMASCQALYGVTMEEEGVSKLIPVKIENARSEETAS.

32–39 is a binding site for ATP; sequence PNGCGKTN. Coiled-coil stretches lie at residues 167 to 322 and 358 to 497; these read ITRY…ERLN and AEFE…ALCN. Residues 409 to 442 form a disordered region; sequence KEHLEGSVNRLDQRKRDLERSMEQAEPERRRTSE. The span at 419–442 shows a compositional bias: basic and acidic residues; that stretch reads LDQRKRDLERSMEQAEPERRRTSE. Positions 523–632 constitute an SMC hinge domain; it reads LGCLSDLISV…VADLDAAEQL (110 aa). Coiled-coil stretches lie at residues 669–941 and 980–1025; these read GKKA…VMER and NELA…ALEK.

The protein belongs to the SMC family. As to quaternary structure, homodimer.

The protein localises to the cytoplasm. In terms of biological role, required for chromosome condensation and partitioning. The chain is Chromosome partition protein Smc from Chlorobaculum tepidum (strain ATCC 49652 / DSM 12025 / NBRC 103806 / TLS) (Chlorobium tepidum).